A 409-amino-acid chain; its full sequence is Inactive serine protease 35 (409 aa).

The signal sequence occupies residues 1–17; that stretch reads MLLWLIFFTPGWTLIDG. N-linked (GlcNAc...) asparagine glycosylation is found at asparagine 87 and asparagine 107. The Peptidase S1 domain maps to 120-404; sequence VYGTDSRFSI…ICLWIHGNDA (285 aa). A disulfide bond links cysteine 150 and cysteine 166. Residues 188–203 are compositionally biased toward basic residues; that stretch reads RNKSGGKKRRGSKRSR. A disordered region spans residues 188–246; that stretch reads RNKSGGKKRRGSKRSRRETSGGDQREGPREHLQDRVKAGRRRKQSGGGQRVSEGRPSFR. The span at 204–224 shows a compositional bias: basic and acidic residues; that stretch reads RETSGGDQREGPREHLQDRVK.

The protein belongs to the peptidase S1 family.

Its subcellular location is the secreted. In Macaca mulatta (Rhesus macaque), this protein is Inactive serine protease 35 (PRSS35).